The sequence spans 628 residues: 1-deoxy-D-xylulose-5-phosphate synthase (628 aa).

Thiamine diphosphate is bound by residues histidine 72 and 113–115 (GHA). Aspartate 144 provides a ligand contact to Mg(2+). Residues 145-146 (GA), asparagine 174, tyrosine 287, and glutamate 370 each bind thiamine diphosphate. Position 174 (asparagine 174) interacts with Mg(2+).

This sequence belongs to the transketolase family. DXPS subfamily. Homodimer. It depends on Mg(2+) as a cofactor. Thiamine diphosphate serves as cofactor.

The enzyme catalyses D-glyceraldehyde 3-phosphate + pyruvate + H(+) = 1-deoxy-D-xylulose 5-phosphate + CO2. It functions in the pathway metabolic intermediate biosynthesis; 1-deoxy-D-xylulose 5-phosphate biosynthesis; 1-deoxy-D-xylulose 5-phosphate from D-glyceraldehyde 3-phosphate and pyruvate: step 1/1. Its function is as follows. Catalyzes the acyloin condensation reaction between C atoms 2 and 3 of pyruvate and glyceraldehyde 3-phosphate to yield 1-deoxy-D-xylulose-5-phosphate (DXP). In Prochlorococcus marinus (strain NATL2A), this protein is 1-deoxy-D-xylulose-5-phosphate synthase.